A 1148-amino-acid chain; its full sequence is Pyruvate carboxylase (1148 aa).

In terms of domain architecture, Biotin carboxylation spans 1–457 (MSQQSIQKVL…DTSFIDTTPE (457 aa)). ATP-binding residues include K121, E205, and H240. One can recognise an ATP-grasp domain in the interval 125 to 321 (REQAEKAGIP…IVQTQILVAQ (197 aa)). K242 is a catalytic residue. The 269-residue stretch at 534-802 (VLLTDTTFRD…RPEMNVQGVE (269 aa)) folds into the Pyruvate carboxyltransferase domain. Substrate contacts are provided by residues 542 to 546 (RDAHQ) and R615. A divalent metal cation is bound at residue D543. A divalent metal cation contacts are provided by K712, H741, and H743. N6-carboxylysine is present on K712. Residue T876 participates in substrate binding. Positions 1071 to 1146 (KADRTNPSHI…QTGDLLLEIE (76 aa)) constitute a Biotinyl-binding domain. K1112 carries the post-translational modification N6-biotinyllysine.

In terms of assembly, homotetramer. At very low potassium concentrations, when intracellular levels of c-di-AMP are low, interacts with apo-DarB. c-di-AMP inhibits the binding of DarB to PYC. Does not bind directly c-di-AMP. The cofactor is biotin.

It catalyses the reaction hydrogencarbonate + pyruvate + ATP = oxaloacetate + ADP + phosphate + H(+). With respect to regulation, activated by the cyclic di-AMP (c-di-AMP) receptor DarB in the absence of c-di-AMP. Allosterically activated by acetyl-CoA. Inhibited by the biotin-complexing protein avidin. Functionally, catalyzes a 2-step reaction, involving the ATP-dependent carboxylation of the covalently attached biotin in the first step and the transfer of the carboxyl group to pyruvate in the second, leading to oxaloacetate production. Fulfills an anaplerotic function in B.subtilis as it is necessary for growth on glucose, but is not required for sporulation. In Bacillus subtilis (strain 168), this protein is Pyruvate carboxylase (pyc).